The primary structure comprises 333 residues: Cathepsin M (333 aa).

A signal peptide spans 1 to 15 (MTSAIFLAMLCLGMA). Residues 16–113 (LPSPAPDPIL…KSVQKRLSVN (98 aa)) constitute a propeptide, activation peptide. 2 disulfide bridges follow: Cys-135/Cys-178 and Cys-169/Cys-211. The active site involves Cys-138. Asn-217, Asn-221, and Asn-268 each carry an N-linked (GlcNAc...) asparagine glycan. Residues Cys-269 and Cys-322 are joined by a disulfide bond. Catalysis depends on residues His-276 and Asn-300.

This sequence belongs to the peptidase C1 family. As to expression, placenta.

The protein localises to the lysosome. In Mus musculus (Mouse), this protein is Cathepsin M (Ctsm).